A 111-amino-acid chain; its full sequence is uncharacterized protein (111 aa).

The next 2 membrane-spanning stretches (helical) occupy residues 18–38 and 42–62; these read LNVF…LFVS and LALA…RTFP.

It localises to the membrane. This is an uncharacterized protein from Saccharomyces cerevisiae (strain ATCC 204508 / S288c) (Baker's yeast).